The sequence spans 101 residues: ATP-dependent Clp protease adapter protein ClpS (101 aa).

This sequence belongs to the ClpS family. In terms of assembly, binds to the N-terminal domain of the chaperone ClpA.

In terms of biological role, involved in the modulation of the specificity of the ClpAP-mediated ATP-dependent protein degradation. This is ATP-dependent Clp protease adapter protein ClpS from Clostridium acetobutylicum (strain ATCC 824 / DSM 792 / JCM 1419 / IAM 19013 / LMG 5710 / NBRC 13948 / NRRL B-527 / VKM B-1787 / 2291 / W).